The sequence spans 133 residues: uncharacterized protein (133 aa).

This is an uncharacterized protein from Rickettsia conorii (strain ATCC VR-613 / Malish 7).